The primary structure comprises 69 residues: UPF0150 protein AF_1072 (69 aa).

The protein belongs to the UPF0150 family.

The chain is UPF0150 protein AF_1072 from Archaeoglobus fulgidus (strain ATCC 49558 / DSM 4304 / JCM 9628 / NBRC 100126 / VC-16).